The following is a 2588-amino-acid chain: uncharacterized protein (2588 aa).

Over residues 1 to 11 (MSFKNNEKYMD) the composition is skewed to basic and acidic residues. 9 disordered regions span residues 1 to 56 (MSFK…NISN), 442 to 598 (ELES…HFSN), 774 to 801 (KKEK…NNNI), 1303 to 1357 (DSHD…KKKY), 1631 to 1662 (QNSN…HHQN), 1685 to 1705 (NNNN…KDQP), 1820 to 1856 (KLNV…EEND), 2317 to 2342 (KKKK…DNIN), and 2415 to 2437 (YDNN…NSHT). Residues 42-56 (NNNNNNNNNNSNISN) show a composition bias toward low complexity. Residues 413–452 (YREIEENEKVMEMQRRENELLEEKKRLKQELESYHDDSST) are a coiled coil. The segment covering 451 to 462 (STDDDSSADEQQ) has biased composition (acidic residues). 2 stretches are compositionally biased toward basic and acidic residues: residues 463-515 (DERR…KNDD) and 522-588 (DHTH…DHTH). Residues 785–801 (DNNNNNNNNNNNDNNNI) are compositionally biased toward low complexity. Acidic residues predominate over residues 1308-1318 (NNDDSVNDSND). Low complexity predominate over residues 1319–1331 (DTNNVNVNVNVND). The span at 1347-1356 (DKKKKHKKKK) shows a compositional bias: basic residues. The segment covering 1631-1643 (QNSNNKSNDSLKM) has biased composition (polar residues). Residues 1685–1698 (NNNNNNNNNNNNND) are compositionally biased toward low complexity. Over residues 1828 to 1838 (QGERQDERNID) the composition is skewed to basic and acidic residues. Residues 1839 to 1856 (HEDEPVSSNTEDDHEEND) show a composition bias toward acidic residues. Residues 2416-2434 (DNNNNNDNNNDNNNDNNNN) show a composition bias toward low complexity.

This is an uncharacterized protein from Plasmodium falciparum (isolate 3D7).